The following is a 181-amino-acid chain: Putative poly [ADP-ribose] polymerase-like 100L (181 aa).

A PARP catalytic domain is found at 1 to 181 (MDNLKEEETN…KIKYIIHITK (181 aa)).

The enzyme catalyses NAD(+) + (ADP-D-ribosyl)n-acceptor = nicotinamide + (ADP-D-ribosyl)n+1-acceptor + H(+).. The sequence is that of Putative poly [ADP-ribose] polymerase-like 100L from Invertebrate iridescent virus 6 (IIV-6).